Consider the following 89-residue polypeptide: Large ribosomal subunit protein bL31B (89 aa).

Belongs to the bacterial ribosomal protein bL31 family. Type B subfamily. Part of the 50S ribosomal subunit.

This is Large ribosomal subunit protein bL31B from Corynebacterium urealyticum (strain ATCC 43042 / DSM 7109).